Consider the following 404-residue polypeptide: F-box protein At3g57590 (404 aa).

An F-box domain is found at 1–47; it reads MEPIPNDLILEIFSRLPAKSVIGFRTLSKHWASILRSPVFTELFLTR.

The protein is F-box protein At3g57590 of Arabidopsis thaliana (Mouse-ear cress).